A 229-amino-acid polypeptide reads, in one-letter code: 5'-methylthioadenosine/S-adenosylhomocysteine nucleosidase (229 aa).

Residue Glu12 is the Proton acceptor of the active site. Residues Gly78, Ile152, and 173 to 174 (ME) contribute to the substrate site. Catalysis depends on Asp197, which acts as the Proton donor.

The protein belongs to the PNP/UDP phosphorylase family. MtnN subfamily.

It carries out the reaction S-adenosyl-L-homocysteine + H2O = S-(5-deoxy-D-ribos-5-yl)-L-homocysteine + adenine. The enzyme catalyses S-methyl-5'-thioadenosine + H2O = 5-(methylsulfanyl)-D-ribose + adenine. The catalysed reaction is 5'-deoxyadenosine + H2O = 5-deoxy-D-ribose + adenine. It functions in the pathway amino-acid biosynthesis; L-methionine biosynthesis via salvage pathway; S-methyl-5-thio-alpha-D-ribose 1-phosphate from S-methyl-5'-thioadenosine (hydrolase route): step 1/2. Functionally, catalyzes the irreversible cleavage of the glycosidic bond in both 5'-methylthioadenosine (MTA) and S-adenosylhomocysteine (SAH/AdoHcy) to adenine and the corresponding thioribose, 5'-methylthioribose and S-ribosylhomocysteine, respectively. Also cleaves 5'-deoxyadenosine, a toxic by-product of radical S-adenosylmethionine (SAM) enzymes, into 5-deoxyribose and adenine. This chain is 5'-methylthioadenosine/S-adenosylhomocysteine nucleosidase, found in Mannheimia succiniciproducens (strain KCTC 0769BP / MBEL55E).